A 138-amino-acid polypeptide reads, in one-letter code: Holo-[acyl-carrier-protein] synthase (138 aa).

Residues Asp8 and Glu57 each coordinate Mg(2+).

It belongs to the P-Pant transferase superfamily. AcpS family. Requires Mg(2+) as cofactor.

Its subcellular location is the cytoplasm. It carries out the reaction apo-[ACP] + CoA = holo-[ACP] + adenosine 3',5'-bisphosphate + H(+). Its function is as follows. Transfers the 4'-phosphopantetheine moiety from coenzyme A to a Ser of acyl-carrier-protein. The protein is Holo-[acyl-carrier-protein] synthase of Phenylobacterium zucineum (strain HLK1).